The primary structure comprises 192 residues: Probable thymidylate kinase (192 aa).

ATP is bound at residue 7 to 14 (GIDGAGKS).

It belongs to the thymidylate kinase family.

The enzyme catalyses dTMP + ATP = dTDP + ADP. The sequence is that of Probable thymidylate kinase from Methanobrevibacter smithii (strain ATCC 35061 / DSM 861 / OCM 144 / PS).